Here is an 832-residue protein sequence, read N- to C-terminus: MDESSLVRFVFLLCLVSSSVFCLAESDQNATVSSAVYIVTLKDRPSVHFSGRESSDSKHSLTATSSQIYRTLNRSASIIRVHDSLLRNVLRKENYLKLYSYHYLINGFSAVLTRKQADRLAAREEVENVVLDFLVEKATTHTPQFLGLPRGAWLRDGGSEYAGEGVVIGFIDTGIDPTHPSFSDKISGHTYSVPPHFTGVCEVTIGFPPGSCNRKLIGARHFAESALSRGVLNSSQDDASPFDGEGHGTHTASVAAGNHGIPVVVAGHRLGNASGMAPRAHIAIYKALYKRFGGFAADIIAAIDQAAQDGVDIINLSITPNRRPPGIATFFNPIDMALLSAVKAGIFVVQAAGNTGPAPKSMSSFSPWIFTVGATSHDRVYSNSIILGNNVTIPGVGLASGTRIMHKLVLATHALRNGTTVMDAIYVGECQDSSSFDQKLVQGKILVCSYTVRFILGVSTIKQALLTAKNLTAAGLVFYIDPSATGFQMTSSPMDIPGILISSPQDSQALLRYYNSSLLRENGSGKIVGSASVAKIVGGMRPTYGITAPKVMYFSARGPDPEDDSFVDADIMKPNLVAPGNAIWGAWSPLGIGTNDFQGERFAMESGTSMSAPHVTGIAALIKQKFPHFTPAAIASALSTTASLSDRKGEHIMAQRTVLNPDISQSPATPFDMGSGFVNATAALDPGLIFDIGYNEYMKFLCGINGSSPVVLNYTGESCSSYNSSLAASDLNLPSVTIAKLVGTRAVLRWVTNIATTATNETYIVGWMAPDSVSVKVSPAKFTIGNGQTRVLSLVFRAMKNVSMASFGRIGLFGDRGHVVNIPVAVIYKIAV.

Positions 1 to 24 (MDESSLVRFVFLLCLVSSSVFCLA) are cleaved as a signal peptide. A propeptide spans 25–138 (ESDQNATVSS…VVLDFLVEKA (114 aa)) (activation peptide). Residues Asn29 and Asn73 are each glycosylated (N-linked (GlcNAc...) asparagine). One can recognise an Inhibitor I9 domain in the interval 36 to 136 (VYIVTLKDRP…ENVVLDFLVE (101 aa)). The Peptidase S8 domain maps to 145 to 684 (FLGLPRGAWL…SGFVNATAAL (540 aa)). Residue Asp172 is the Charge relay system of the active site. Asn233 carries an N-linked (GlcNAc...) asparagine glycan. The active-site Charge relay system is the His247. Asn272, Asn315, Asn390, Asn417, Asn470, Asn515, and Asn522 each carry an N-linked (GlcNAc...) asparagine glycan. In terms of domain architecture, PA spans 408 to 503 (LVLATHALRN…MDIPGILISS (96 aa)). Ser609 serves as the catalytic Charge relay system. N-linked (GlcNAc...) asparagine glycans are attached at residues Asn679, Asn705, Asn713, Asn723, Asn760, and Asn801.

Belongs to the peptidase S8 family.

The protein localises to the secreted. The chain is Subtilisin-like protease SBT2.1 from Arabidopsis thaliana (Mouse-ear cress).